A 436-amino-acid polypeptide reads, in one-letter code: Voltage-gated potassium channel regulatory subunit KCNG3 (436 aa).

Topologically, residues 1 to 168 are cytoplasmic; the sequence is MTFGRSGAAS…RTFEEPTSSL (168 aa). The helical transmembrane segment at 169–190 threads the bilayer; sequence AAQILASVSVVFVIVSMVVLCA. Residues 191-220 are Extracellular-facing; that stretch reads STLPDWRNAAADNRSLDDRSRYSAGPGREP. The chain crosses the membrane as a helical span at residues 221 to 242; it reads SGIIEAICIGWFTAECIVRFIV. The Cytoplasmic portion of the chain corresponds to 243–253; that stretch reads SKNKCEFVKRP. Residues 254-274 traverse the membrane as a helical segment; sequence LNIIDLLAITPYYISVLMTVF. At 275–284 the chain is on the extracellular side; it reads TGENSQLQRA. Residues 285–305 form a helical; Voltage-sensor membrane-spanning segment; the sequence is GVTLRVLRMMRIFWVIKLARH. Topologically, residues 306–320 are cytoplasmic; that stretch reads FIGLQTLGLTLKRCY. The chain crosses the membrane as a helical span at residues 321–342; the sequence is REMVMLLVFICVAMAIFSALSQ. Over 343-360 the chain is Extracellular; the sequence is LLEHGLDLETSNKDFTSI. The segment at residues 361-372 is an intramembrane region (helical); the sequence is PAACWWVIISMT. The short motif at 373–378 is the Selectivity filter element; sequence TVGYGD. Residues 373 to 380 lie within the membrane without spanning it; that stretch reads TVGYGDMY. Residues 381 to 387 are Extracellular-facing; that stretch reads PITVPGR. Residues 388–416 traverse the membrane as a helical segment; sequence ILGGVCVVSGIVLLALPITFIYHSFVQCY. Topologically, residues 417–436 are cytoplasmic; sequence HELKFRSARYSRSLSTEFLN.

This sequence belongs to the potassium channel family. G (TC 1.A.1.2) subfamily. Kv6.3/KCNG3 sub-subfamily. As to quaternary structure, heterotetramer with KCNB1. Does not form homomultimers. In terms of tissue distribution, expressed in the brain, liver, testis, small intestine, colon, thymus and adrenal gland.

It localises to the cell membrane. The protein resides in the cytoplasm. In terms of biological role, regulatory subunit of the voltage-gated potassium (Kv) channel which, when coassembled with KCNB1, modulates the kinetics parameters of the heterotetrameric channel namely the inactivation and deactivation rate. Potassium channel subunit that does not form functional channels by itself. Reduces the deactivation rate. Moderately accelerates activation. This chain is Voltage-gated potassium channel regulatory subunit KCNG3, found in Homo sapiens (Human).